The primary structure comprises 131 residues: Small ribosomal subunit protein uS11 (131 aa).

It belongs to the universal ribosomal protein uS11 family. As to quaternary structure, part of the 30S ribosomal subunit. Interacts with proteins S7 and S18. Binds to IF-3.

In terms of biological role, located on the platform of the 30S subunit, it bridges several disparate RNA helices of the 16S rRNA. Forms part of the Shine-Dalgarno cleft in the 70S ribosome. This Helicobacter pylori (strain G27) protein is Small ribosomal subunit protein uS11.